Here is a 352-residue protein sequence, read N- to C-terminus: Photosystem II D2 protein (352 aa).

Residues 40–60 (CAYMALGGWLTGTTFVTSWYT) traverse the membrane as a helical segment. Histidine 117 contacts chlorophyll a. The chain crosses the membrane as a helical span at residues 124–140 (GFMLRQFEIARLVGIRP). Residues glutamine 129 and asparagine 142 each contribute to the pheophytin a site. The chain crosses the membrane as a helical span at residues 152–165 (VFVSVFLMYPLGQS). Residue histidine 197 participates in chlorophyll a binding. Residues 207–227 (GALLCAIHGATVENTLFEDGD) traverse the membrane as a helical segment. A plastoquinone contacts are provided by histidine 214 and phenylalanine 261. Histidine 214 provides a ligand contact to Fe cation. Histidine 268 contributes to the Fe cation binding site. The helical transmembrane segment at 278–294 (GLWTSSIGIIGLALNLR) threads the bilayer.

The protein belongs to the reaction center PufL/M/PsbA/D family. In terms of assembly, PSII is composed of 1 copy each of membrane proteins PsbA, PsbB, PsbC, PsbD, PsbE, PsbF, PsbH, PsbI, PsbJ, PsbK, PsbL, PsbM, PsbT, PsbX, PsbY, PsbZ, Psb30/Ycf12, peripheral proteins PsbO, CyanoQ (PsbQ), PsbU, PsbV and a large number of cofactors. It forms dimeric complexes. The cofactor is The D1/D2 heterodimer binds P680, chlorophylls that are the primary electron donor of PSII, and subsequent electron acceptors. It shares a non-heme iron and each subunit binds pheophytin, quinone, additional chlorophylls, carotenoids and lipids. There is also a Cl(-1) ion associated with D1 and D2, which is required for oxygen evolution. The PSII complex binds additional chlorophylls, carotenoids and specific lipids..

The protein resides in the cellular thylakoid membrane. The catalysed reaction is 2 a plastoquinone + 4 hnu + 2 H2O = 2 a plastoquinol + O2. Its function is as follows. Photosystem II (PSII) is a light-driven water:plastoquinone oxidoreductase that uses light energy to abstract electrons from H(2)O, generating O(2) and a proton gradient subsequently used for ATP formation. It consists of a core antenna complex that captures photons, and an electron transfer chain that converts photonic excitation into a charge separation. The D1/D2 (PsbA/PsbD) reaction center heterodimer binds P680, the primary electron donor of PSII as well as several subsequent electron acceptors. D2 is needed for assembly of a stable PSII complex. The sequence is that of Photosystem II D2 protein from Synechococcus sp. (strain RCC307).